The sequence spans 712 residues: Anaerobic ribonucleoside-triphosphate reductase (712 aa).

The ATP-cone domain maps to 3 to 92 (PHVMKRDGCK…EYRHDRDIER (90 aa)). The region spanning 583–708 (KKVNPYDKID…VKRRVKHLGN (126 aa)) is the Glycine radical domain. Positions 644, 647, 662, and 665 each coordinate Zn(2+). G681 is modified (glycine radical).

Belongs to the anaerobic ribonucleoside-triphosphate reductase family. In terms of assembly, homodimer. Forms a tetramer composed of two NrdD and two NrdG subunits.

It carries out the reaction a ribonucleoside 5'-triphosphate + formate + H(+) = a 2'-deoxyribonucleoside 5'-triphosphate + CO2 + H2O. The enzyme catalyses formate + ATP + H(+) = dATP + CO2 + H2O. The catalysed reaction is CTP + formate + H(+) = dCTP + CO2 + H2O. It catalyses the reaction GTP + formate + H(+) = dGTP + CO2 + H2O. It carries out the reaction UTP + formate + H(+) = dUTP + CO2 + H2O. Activated under anaerobic conditions by NrdG, a tightly associated activase. Activation involves the formation of a glycyl radical at Gly-681. Exposure of the activated reductase to oxygen leads to C-terminal truncation and inactivation of the protein, by cleavage at the N-terminal side of Gly-681. The presence of zinc protects the protein from proteolysis and prevents the formation of disulfide bridges within it. The enzyme shows a basal activity in the absence of any effector, but reduction is stimulated up to 10-fold by an appropriate modulator (dGTP for ATP reduction, ATP for CTP and UTP reduction, and dTTP for GTP reduction). dGTP and dTTP inhibit the reduction of the incorrect substrate, and dATP inhibits reduction of all four. These modulators act as allosteric effectors. Catalyzes the conversion of ribonucleotides into deoxyribonucleotides, which are required for DNA synthesis and repair. Can reduce each of the four common ribonucleoside triphosphates. This Escherichia coli (strain K12) protein is Anaerobic ribonucleoside-triphosphate reductase.